Consider the following 406-residue polypeptide: Glutamyl-tRNA reductase (406 aa).

Substrate is bound by residues 49–52 (TCHR), Ser107, 112–114 (EPQ), and Gln118. Cys50 acts as the Nucleophile in catalysis. 187 to 192 (GAGETG) is a binding site for NADP(+).

It belongs to the glutamyl-tRNA reductase family. Homodimer.

The enzyme catalyses (S)-4-amino-5-oxopentanoate + tRNA(Glu) + NADP(+) = L-glutamyl-tRNA(Glu) + NADPH + H(+). It functions in the pathway porphyrin-containing compound metabolism; protoporphyrin-IX biosynthesis; 5-aminolevulinate from L-glutamyl-tRNA(Glu): step 1/2. Its function is as follows. Catalyzes the NADPH-dependent reduction of glutamyl-tRNA(Glu) to glutamate 1-semialdehyde (GSA). The chain is Glutamyl-tRNA reductase from Thermomicrobium roseum (strain ATCC 27502 / DSM 5159 / P-2).